Consider the following 212-residue polypeptide: MQNVRDWQWSQPAPQALGLVPMVVEQSGRGERAYDIYSRLLKERIVFMVGPVTDETANLVVAQMLFLESENPDKDIHLYINSPGGSVTAGLSIYDTMNFIKPSVSTLCIGQAASMGAFLLSAGAKGKRFALPNSRVMIHQPLGGFQGQASDFEIHAREILTLKRKLNELMAAHCGRPLEDLERDTDRDNFMNAAQALEYGLIDQVLENRAAV.

The Nucleophile role is filled by S114. H139 is a catalytic residue.

It belongs to the peptidase S14 family. In terms of assembly, fourteen ClpP subunits assemble into 2 heptameric rings which stack back to back to give a disk-like structure with a central cavity, resembling the structure of eukaryotic proteasomes.

Its subcellular location is the cytoplasm. It carries out the reaction Hydrolysis of proteins to small peptides in the presence of ATP and magnesium. alpha-casein is the usual test substrate. In the absence of ATP, only oligopeptides shorter than five residues are hydrolyzed (such as succinyl-Leu-Tyr-|-NHMec, and Leu-Tyr-Leu-|-Tyr-Trp, in which cleavage of the -Tyr-|-Leu- and -Tyr-|-Trp bonds also occurs).. Functionally, cleaves peptides in various proteins in a process that requires ATP hydrolysis. Has a chymotrypsin-like activity. Plays a major role in the degradation of misfolded proteins. This Laribacter hongkongensis (strain HLHK9) protein is ATP-dependent Clp protease proteolytic subunit.